Here is a 438-residue protein sequence, read N- to C-terminus: Protein kinase PINOID (438 aa).

A disordered region spans residues Met-1–Ser-24. Over residues Leu-11–Ser-24 the composition is skewed to polar residues. Positions Phe-75–Phe-394 constitute a Protein kinase domain. Residues Ile-81–Val-89 and Lys-109 each bind ATP. Asp-205 functions as the Proton acceptor in the catalytic mechanism. In terms of domain architecture, AGC-kinase C-terminal spans Lys-395–Phe-438.

It belongs to the protein kinase superfamily. Ser/Thr protein kinase family. As to quaternary structure, interacts with PDK1, CML12 and PBP1. Component of a complex made of PINs (e.g. PIN1 and PIN2), MAB4/MELs (e.g. NPY1/MAB4 and NPY5/MEL1) and AGC kinases (e.g. D6PK and PID) at the plasma membrane. Binds directly to PIN2, NPY1/MAB4 and NPY5/MEL1. Autophosphorylated. Phosphorylated by PDK1. As to expression, expressed in root hair cells, shoot xylem parenchyma cells and endodermis around the vasculature. Expressed in anther primordia, vasculature of the growing flower stalk, young pedicels and bracts and developing sepals, but not in petals. In pistils, transiently expressed in the vasculature of the style and the septum, and in the integuments and funiculus of the developing ovule.

The protein resides in the cytoplasm. It is found in the cytosol. It localises to the cell membrane. The catalysed reaction is L-seryl-[protein] + ATP = O-phospho-L-seryl-[protein] + ADP + H(+). It carries out the reaction L-threonyl-[protein] + ATP = O-phospho-L-threonyl-[protein] + ADP + H(+). With respect to regulation, activated by magnesium and PDK1. Inhibited by staurosporine. Repressed by calcium. Functionally, serine/threonine-protein kinase involved in the regulation of auxin signaling. Acts as a positive regulator of cellular auxin efflux and regulates organ development by enhancing polar auxin transport. Phosphorylates conserved serine residues in the PIN auxin efflux carriers. Phosphorylation of PIN proteins is required and sufficient for apical-basal PIN polarity that enables directional intercellular auxin fluxes, which mediate differential growth, tissue patterning and organogenesis. Phosphorylates PIN proteins (e.g. PIN1 and PIN2), especially when NPY proteins (e.g. NPY1/MAB4 and NPY5/MEL1) are recruited at the plasma membrane; this enhances the polarized localizations (apical or basal) of PINs in the cell by limiting their lateral diffusion-based escape. Acts in association with PIN1 to control the establishment of bilateral symmetry and promotion of cotyledon outgrowth. Regulates root gravitropism through modulation of PIN2-dependent basipetal auxin transport. Required for polarization of PIN3-dependent auxin transport for hypocotyl gravitropic response. The protein kinase activity of PID is essential for its auxin efflux regulatory function. PID kinase and PP2A phosphatase activities antagonistically regulate phosphorylation of PIN proteins, affecting PIN sorting. The protein is Protein kinase PINOID of Arabidopsis thaliana (Mouse-ear cress).